The primary structure comprises 479 residues: Aldehyde dehydrogenase (479 aa).

190-195 (GSSKVG) is a binding site for NAD(+). The active-site Proton acceptor is the glutamate 212. The active-site Nucleophile is the cysteine 247.

Belongs to the aldehyde dehydrogenase family.

It is found in the plastid. It localises to the amyloplast. The protein resides in the chloroplast. It carries out the reaction an aldehyde + NAD(+) + H2O = a carboxylate + NADH + 2 H(+). In terms of biological role, oxidizes nonanal, propionaldehyde and acetaldehyde in vitro, in the following decreasing order of reactivity: nonanal, propionaldehyde, acetaldehyde. In Craterostigma plantagineum (Blue gem), this protein is Aldehyde dehydrogenase (ALDH).